The chain runs to 405 residues: uncharacterized protein (405 aa).

Helical transmembrane passes span 19–39, 48–68, 85–105, 106–126, 129–149, 156–176, 178–198, 224–244, 252–272, 283–303, 309–329, 344–364, and 366–386; these read IVSI…PLAV, MGFS…ATLL, IVVF…LADI, ASAW…ILGI, SFAG…LHIG, GIVT…CYAW, GLQG…LLAL, GMAL…ITLF, GAAF…LLFP, VAMI…TAAM, IGVL…GVVA, TYTV…GLVM, and WAGV…ALLL.

The protein belongs to the major facilitator superfamily. YhhS family.

The protein localises to the cell inner membrane. This is an uncharacterized protein from Salmonella paratyphi C (strain RKS4594).